Reading from the N-terminus, the 64-residue chain is Large ribosomal subunit protein eL37 (64 aa).

A C4-type zinc finger spans residues Gly1–Cys6. Cys3 and Cys6 together coordinate Zn(2+).

It belongs to the eukaryotic ribosomal protein eL37 family. Requires Zn(2+) as cofactor.

Its function is as follows. Binds to the 23S rRNA. This is Large ribosomal subunit protein eL37 (RPL37) from Solanum lycopersicum (Tomato).